A 546-amino-acid chain; its full sequence is Chaperonin GroEL (546 aa).

ATP contacts are provided by residues 30–33, Lys51, 87–91, Gly415, and Asp495; these read TLGP and DGTTT.

Belongs to the chaperonin (HSP60) family. As to quaternary structure, forms a cylinder of 14 subunits composed of two heptameric rings stacked back-to-back. Interacts with the co-chaperonin GroES.

It is found in the cytoplasm. It catalyses the reaction ATP + H2O + a folded polypeptide = ADP + phosphate + an unfolded polypeptide.. Its function is as follows. Together with its co-chaperonin GroES, plays an essential role in assisting protein folding. The GroEL-GroES system forms a nano-cage that allows encapsulation of the non-native substrate proteins and provides a physical environment optimized to promote and accelerate protein folding. In Brucella ovis (strain ATCC 25840 / 63/290 / NCTC 10512), this protein is Chaperonin GroEL.